A 326-amino-acid polypeptide reads, in one-letter code: uncharacterized protein (326 aa).

28 to 35 serves as a coordination point for ATP; sequence GPINSGKT.

Belongs to the archaeal ATPase family.

This is an uncharacterized protein from Pyrococcus abyssi (strain GE5 / Orsay).